A 552-amino-acid polypeptide reads, in one-letter code: Hyaluronan synthase 2 (552 aa).

At 1–11 (MHCERFLCILR) the chain is on the cytoplasmic side. Residues 12-32 (IIGTTLFGVSLLLGITAAYIV) traverse the membrane as a helical segment. The Extracellular portion of the chain corresponds to 33–45 (GYQFIQTDNYYFS). A helical membrane pass occupies residues 46-66 (FGLYGAFLASHLIIQSLFAFL). Over 67-374 (EHRKMKKSLE…NAMWFHKHHL (308 aa)) the chain is Cytoplasmic. Phosphothreonine is present on threonine 110. Lysine 190 is covalently cross-linked (Glycyl lysine isopeptide (Lys-Gly) (interchain with G-Cter in ubiquitin)). Serine 221 is a glycosylation site (O-linked (GlcNAc) serine). Threonine 328 carries the post-translational modification Phosphothreonine. Residues 375–395 (WMTYEAIITGFFPFFLIATVI) form a helical membrane-spanning segment. Topologically, residues 396-402 (QLFYRGK) are extracellular. Residues 403 to 423 (IWNILLFLLTVQLVGLIKSSF) traverse the membrane as a helical segment. The Cytoplasmic segment spans residues 424-429 (ASCLRG). A helical membrane pass occupies residues 430–450 (NIVMVFMSLYSVLYMSSLLPA). The Extracellular portion of the chain corresponds to 451 to 475 (KMFAIATINKAGWGTSGRKTIVVNF). A helical transmembrane segment spans residues 476-496 (IGLIPVSVWFTILLGGVIFTI). Residues 497–510 (YKESKRPFSESKQT) lie on the Cytoplasmic side of the membrane. The helical transmembrane segment at 511–531 (VLIVGTLLYACYWVMLLTLYV) threads the bilayer. The Extracellular segment spans residues 532-552 (VLINKCGRRKKGQQYDMVLDV).

This sequence belongs to the NodC/HAS family. In terms of assembly, homodimer; dimerization promotes enzymatic activity. Forms heterodimer with HAS3. Forms heterodimer with HAS1. Mg(2+) serves as cofactor. In terms of processing, phosphorylation at Thr-328 is essential for hyaluronan synthase activity. Phosphorylation at Thr-110 is required for transport from ER to Golgi. Post-translationally, O-GlcNAcylation at Ser-221 increases the stability of HAS2 and plasma membrane localization. Ubiquitination at Lys-190; this ubiquitination is essential for hyaluronan synthase activity and homo- or hetero-oligomerization. Can also be poly-ubiquitinated. Deubiquitinated by USP17 and USP4. USP17 efficiently removes 'Lys-63'- and 'Lys-48'-linked polyubiquitin chains, whereas USP4 preferentially removes monoubiquitination and, partially, both 'Lys-63'- and 'Lys-48'-linked polyubiquitin chain. Expressed in fibroblasts.

The protein localises to the cell membrane. It localises to the endoplasmic reticulum membrane. Its subcellular location is the vesicle. It is found in the golgi apparatus membrane. The protein resides in the lysosome. The enzyme catalyses [hyaluronan](n) + UDP-N-acetyl-alpha-D-glucosamine = N-acetyl-beta-D-glucosaminyl-(1-&gt;4)-[hyaluronan](n) + UDP + H(+). The catalysed reaction is N-acetyl-beta-D-glucosaminyl-(1-&gt;4)-[hyaluronan](n) + UDP-alpha-D-glucuronate = [hyaluronan](n+1) + UDP + H(+). The protein operates within glycan biosynthesis; hyaluronan biosynthesis. With respect to regulation, regulated by several post-translational modifications such as ubiquitination/deubiquitination, phosphorylation and O-GlcNAcylation. The enzymatic activity depends on the availability of UDP-GlcUA and UDP-GlcNAc. Its function is as follows. Catalyzes the addition of GlcNAc or GlcUA monosaccharides to the nascent hyaluronan polymer. Therefore, it is essential to hyaluronan synthesis a major component of most extracellular matrices that has a structural role in tissues architectures and regulates cell adhesion, migration and differentiation. This is one of three isoenzymes responsible for cellular hyaluronan synthesis and it is particularly responsible for the synthesis of high molecular mass hyaluronan. This Homo sapiens (Human) protein is Hyaluronan synthase 2.